A 245-amino-acid polypeptide reads, in one-letter code: Adapter protein MecA (245 aa).

The protein belongs to the MecA family. As to quaternary structure, homodimer.

Enables the recognition and targeting of unfolded and aggregated proteins to the ClpC protease or to other proteins involved in proteolysis. This is Adapter protein MecA from Streptococcus pneumoniae serotype 19F (strain G54).